The sequence spans 438 residues: 23S rRNA (uracil(1939)-C(5))-methyltransferase RlmD (438 aa).

Residues 13 to 71 (KAPLGPMQTYLVEGLTHEAKGVARLNGKVTFIEGALPGETVTAQVNKPGRRFDEAVLNA) enclose the TRAM domain. [4Fe-4S] cluster is bound by residues Cys-84, Cys-90, Cys-93, and Cys-167. 6 residues coordinate S-adenosyl-L-methionine: Gln-271, Phe-300, Asn-305, Glu-321, Asp-348, and Asp-368. Cys-394 serves as the catalytic Nucleophile.

It belongs to the class I-like SAM-binding methyltransferase superfamily. RNA M5U methyltransferase family. RlmD subfamily.

The catalysed reaction is uridine(1939) in 23S rRNA + S-adenosyl-L-methionine = 5-methyluridine(1939) in 23S rRNA + S-adenosyl-L-homocysteine + H(+). Its function is as follows. Catalyzes the formation of 5-methyl-uridine at position 1939 (m5U1939) in 23S rRNA. This is 23S rRNA (uracil(1939)-C(5))-methyltransferase RlmD from Marinomonas posidonica (strain CECT 7376 / NCIMB 14433 / IVIA-Po-181).